The primary structure comprises 221 residues: 2-amino-5-formylamino-6-ribosylaminopyrimidin-4(3H)-one 5'-monophosphate deformylase (221 aa).

Glu29, His31, Asp40, and His108 together coordinate Fe cation.

The protein belongs to the creatininase superfamily. FAPy deformylase family. Homodimer. It depends on Fe(2+) as a cofactor. Zn(2+) serves as cofactor.

The enzyme catalyses 2-amino-5-formylamino-6-(5-phospho-D-ribosylamino)pyrimidin-4(3H)-one + H2O = 2,5-diamino-6-(1-D-ribosylamino)pyrimidin-4(3H)-one 5'-phosphate + formate + H(+). The protein operates within cofactor biosynthesis; coenzyme F420 biosynthesis. It functions in the pathway cofactor biosynthesis; riboflavin biosynthesis. Catalyzes the hydrolysis of the formamide of 2-amino-5-formylamino-6-ribosylamino-4(3H)-pyrimidinone 5'-monophosphate (FAPy) to form 2,5-diamino-6-ribosylamino-4(3H)-pyrimidinone 5'-phosphate (APy). This chain is 2-amino-5-formylamino-6-ribosylaminopyrimidin-4(3H)-one 5'-monophosphate deformylase, found in Methanococcus maripaludis (strain C5 / ATCC BAA-1333).